Here is a 384-residue protein sequence, read N- to C-terminus: Guanine nucleotide-binding protein alpha-1 subunit (384 aa).

Residues 1–22 (MGSLCSRNKHYSQADDEENTQT) form a disordered region. A lipid anchor (N-myristoyl glycine) is attached at glycine 2. A lipid anchor (S-palmitoyl cysteine) is attached at cysteine 5. Positions 38–384 (HIQKLLLLGA…RRNLFEAGLL (347 aa)) constitute a G-alpha domain. A G1 motif region spans residues 41–54 (KLLLLGAGDSGKST). GTP contacts are provided by aspartate 49, serine 50, glycine 51, lysine 52, serine 53, threonine 54, aspartate 163, leucine 188, threonine 194, glycine 222, asparagine 288, lysine 289, aspartate 291, and alanine 356. Serine 53 serves as a coordination point for Mg(2+). A G2 motif region spans residues 186-194 (DVLFARIRT). Residue threonine 194 coordinates Mg(2+). Residues 215–224 (YRLFDVGGQR) form a G3 motif region. Residues 284 to 291 (MLFLNKFD) form a G4 motif region. Positions 354–359 (TTALDQ) are G5 motif.

Belongs to the G-alpha family. As to quaternary structure, g proteins are composed of 3 units; alpha, beta and gamma. The alpha chain contains the guanine nucleotide binding site. Mg(2+) is required as a cofactor.

Functionally, guanine nucleotide-binding proteins (G proteins) are involved as modulators or transducers in various transmembrane signaling systems. In Solanum tuberosum (Potato), this protein is Guanine nucleotide-binding protein alpha-1 subunit (GPA1).